The following is a 427-amino-acid chain: Enolase (427 aa).

Residue glutamine 163 participates in (2R)-2-phosphoglycerate binding. Glutamate 205 serves as the catalytic Proton donor. Mg(2+)-binding residues include aspartate 242, glutamate 285, and aspartate 312. Positions 337, 366, 367, and 388 each coordinate (2R)-2-phosphoglycerate. Residue lysine 337 is the Proton acceptor of the active site.

Belongs to the enolase family. Mg(2+) serves as cofactor.

The protein localises to the cytoplasm. It localises to the secreted. The protein resides in the cell surface. It carries out the reaction (2R)-2-phosphoglycerate = phosphoenolpyruvate + H2O. The protein operates within carbohydrate degradation; glycolysis; pyruvate from D-glyceraldehyde 3-phosphate: step 4/5. Functionally, catalyzes the reversible conversion of 2-phosphoglycerate (2-PG) into phosphoenolpyruvate (PEP). It is essential for the degradation of carbohydrates via glycolysis. The chain is Enolase from Bradyrhizobium diazoefficiens (strain JCM 10833 / BCRC 13528 / IAM 13628 / NBRC 14792 / USDA 110).